Consider the following 925-residue polypeptide: Ectonucleotide pyrophosphatase/phosphodiesterase family member 1 (925 aa).

A compositionally biased stretch (gly residues) spans 1 to 17 (MERDGCAGGGSRGGEGG). Positions 1–43 (MERDGCAGGGSRGGEGGRAPREGPAGNGRDRGRSHAAEAPGDP) are disordered. Residues 1-76 (MERDGCAGGG…RTAKDPNTYK (76 aa)) lie on the Cytoplasmic side of the membrane. The short motif at 45-52 (AAASLLAP) is the Di-leucine motif element. The chain crosses the membrane as a helical; Signal-anchor for type II membrane protein span at residues 77 to 97 (VLSLVLSVCVLTTILGCIFGL). Residues 98–925 (KPSCAKEVKS…THLPTFSQED (828 aa)) are Extracellular-facing. SMB domains are found at residues 104 to 144 (EVKS…IEPE) and 145 to 189 (HIWT…GEKS). 10 disulfides stabilise this stretch: Cys108–Cys122, Cys112–Cys140, Cys120–Cys133, Cys126–Cys132, Cys149–Cys166, Cys154–Cys184, Cys164–Cys177, Cys170–Cys176, Cys195–Cys241, and Cys203–Cys415. Asn179 carries an N-linked (GlcNAc...) asparagine glycan. The phosphodiesterase stretch occupies residues 191–591 (VEEPCESINE…APNNGTHGSL (401 aa)). Residues Asp218, Thr256, and Asn277 each coordinate AMP. 2 residues coordinate Zn(2+): Asp218 and Thr256. Catalysis depends on Thr256, which acts as the AMP-threonine intermediate. The CMP site is built by Thr256 and Asn277. The dTMP site is built by Thr256 and Asn277. GMP-binding residues include Thr256 and Asn277. A Phosphothreonine modification is found at Thr256. The N-linked (GlcNAc...) asparagine glycan is linked to Asn285. Leu290, Lys295, and Tyr340 together coordinate GMP. The AMP site is built by Lys295 and Tyr340. 2 residues coordinate CMP: Lys295 and Tyr340. Tyr340 serves as a coordination point for dTMP. An N-linked (GlcNAc...) asparagine glycan is attached at Asn341. Asp376 serves as a coordination point for AMP. Residues Asp376, His380, Asp423, and His424 each coordinate Zn(2+). Asp376 is a binding site for CMP. Asp376 provides a ligand contact to dTMP. Asp376 lines the GMP pocket. His380 serves as a coordination point for 2',3'-cGAMP. His424 is a binding site for AMP. A CMP-binding site is contributed by His424. His424 contributes to the dTMP binding site. His424 is a GMP binding site. 6 cysteine pairs are disulfide-bonded: Cys431–Cys530, Cys480–Cys868, Cys614–Cys672, Cys626–Cys726, Cys628–Cys711, and Cys838–Cys848. The N-linked (GlcNAc...) asparagine glycan is linked to Asn477. Residue Ser532 participates in 2',3'-cGAMP binding. His535 provides a ligand contact to AMP. His535 is a Zn(2+) binding site. Residue His535 coordinates CMP. DTMP is bound at residue His535. His535 serves as a coordination point for GMP. Residues Asn585, Asn643, Asn700, Asn731, and Asn748 are each glycosylated (N-linked (GlcNAc...) asparagine). Residues 597-647 (NPVYTPKHPKEVHPLVQCPFTRNPRDNLGCSCNPSILPIEDFQTQFNLTVA) are linker. The nuclease-like domain stretch occupies residues 654–925 (HETLPYGRPR…THLPTFSQED (272 aa)). Ca(2+)-binding residues include Asp800, Asp802, Asp804, Arg806, and Asp808.

The protein belongs to the nucleotide pyrophosphatase/phosphodiesterase family. Homodimer. Interacts with INSR; leading to inhibit INSR autophosphorylation and subsequent activation of INSR kinase activity. As to quaternary structure, monomeric. The cofactor is Zn(2+). Autophosphorylated as part of the catalytic cycle of phosphodiesterase/pyrophosphatase activity. Post-translationally, N-glycosylated. In terms of processing, the secreted form is produced through cleavage at Lys-103 by intracellular processing. In terms of tissue distribution, expressed in plasma cells and also in a number of non-lymphoid tissues, including the distal convoluted tubule of the kidney, chondrocytes and epididymis. Expressed in melanocytes but not in keratinocytes.

It localises to the cell membrane. The protein resides in the basolateral cell membrane. The protein localises to the secreted. It catalyses the reaction Hydrolytically removes 5'-nucleotides successively from the 3'-hydroxy termini of 3'-hydroxy-terminated oligonucleotides.. The enzyme catalyses a ribonucleoside 5'-triphosphate + H2O = a ribonucleoside 5'-phosphate + diphosphate + H(+). The catalysed reaction is ATP + H2O = AMP + diphosphate + H(+). It carries out the reaction UTP + H2O = UMP + diphosphate + H(+). It catalyses the reaction GTP + H2O = GMP + diphosphate + H(+). The enzyme catalyses CTP + H2O = CMP + diphosphate + H(+). The catalysed reaction is 2',3'-cGAMP + 2 H2O = GMP + AMP + 2 H(+). It carries out the reaction P(1),P(4)-bis(5'-adenosyl) tetraphosphate + H2O = AMP + ATP + 2 H(+). It catalyses the reaction 3',5'-cyclic AMP + H2O = AMP + H(+). At low concentrations of ATP, a phosphorylated intermediate is formed which inhibits further hydrolysis. Functionally, nucleotide pyrophosphatase that generates diphosphate (PPi) and functions in bone mineralization and soft tissue calcification by regulating pyrophosphate levels. PPi inhibits bone mineralization and soft tissue calcification by binding to nascent hydroxyapatite crystals, thereby preventing further growth of these crystals. Preferentially hydrolyzes ATP, but can also hydrolyze other nucleoside 5' triphosphates such as GTP, CTP and UTP to their corresponding monophosphates with release of pyrophosphate, as well as diadenosine polyphosphates, and also 3',5'-cAMP to AMP. May also be involved in the regulation of the availability of nucleotide sugars in the endoplasmic reticulum and Golgi, and the regulation of purinergic signaling. Inhibits ectopic joint calcification and maintains articular chondrocytes by repressing hedgehog signaling; it is however unclear whether hedgehog inhibition is direct or indirect. Appears to modulate insulin sensitivity and function. Also involved in melanogenesis. Also able to hydrolyze 2',3'-cGAMP (cyclic GMP-AMP), a second messenger that activates TMEM173/STING and triggers type-I interferon production. 2',3'-cGAMP degradation takes place in the lumen or extracellular space, and not in the cytosol where it is produced; the role of 2',3'-cGAMP hydrolysis is therefore unclear. Not able to hydrolyze the 2',3'-cGAMP linkage isomer 3'-3'-cGAMP. The chain is Ectonucleotide pyrophosphatase/phosphodiesterase family member 1 from Homo sapiens (Human).